The primary structure comprises 71 residues: Sec-independent protein translocase protein TatA (71 aa).

Residues 9-29 (LLLILAIVVILFGASRLPALG) traverse the membrane as a helical segment. Residues 43-71 (FGGEDEKPTASGNGSTPTQSSSDQGSKQA) form a disordered region. Residues 52 to 71 (ASGNGSTPTQSSSDQGSKQA) show a composition bias toward polar residues.

The protein belongs to the TatA/E family. The Tat system comprises two distinct complexes: a TatABC complex, containing multiple copies of TatA, TatB and TatC subunits, and a separate TatA complex, containing only TatA subunits. Substrates initially bind to the TatABC complex, which probably triggers association of the separate TatA complex to form the active translocon.

It localises to the cell inner membrane. Functionally, part of the twin-arginine translocation (Tat) system that transports large folded proteins containing a characteristic twin-arginine motif in their signal peptide across membranes. TatA could form the protein-conducting channel of the Tat system. The polypeptide is Sec-independent protein translocase protein TatA (Anaeromyxobacter dehalogenans (strain 2CP-C)).